The primary structure comprises 253 residues: 23S rRNA (cytidine-2'-O)-methyltransferase TlyA (253 aa).

The S4 RNA-binding domain occupies 1 to 73 (MRFDFFVSKR…LKLDLLSEIY (73 aa)).

This sequence belongs to the TlyA family.

It carries out the reaction cytidine(1920) in 23S rRNA + S-adenosyl-L-methionine = 2'-O-methylcytidine(1920) in 23S rRNA + S-adenosyl-L-homocysteine + H(+). In terms of biological role, catalyzes the 2'-O-methylation at nucleotide C1920 in 23S rRNA. Enhances motility. Enhances biofilm formation. Involved in the assembly of 70S ribosomes. Involved in virulence by promoting adherence and invasion to host cells. Involved in pathogenicity by modulating secretion of host-protective chemokine interleukin 8 (IL-8). Involved in susceptibility to antibiotic capreomycin. The polypeptide is 23S rRNA (cytidine-2'-O)-methyltransferase TlyA (Campylobacter jejuni subsp. jejuni serotype O:23/36 (strain 81-176)).